Reading from the N-terminus, the 219-residue chain is Thiamine-phosphate synthase (219 aa).

4-amino-2-methyl-5-(diphosphooxymethyl)pyrimidine-binding positions include 44-48 and asparagine 79; that span reads QFREK. Positions 80 and 99 each coordinate Mg(2+). Residue serine 117 coordinates 4-amino-2-methyl-5-(diphosphooxymethyl)pyrimidine. Residue 143-145 coordinates 2-[(2R,5Z)-2-carboxy-4-methylthiazol-5(2H)-ylidene]ethyl phosphate; the sequence is TST. Lysine 146 is a binding site for 4-amino-2-methyl-5-(diphosphooxymethyl)pyrimidine. 2-[(2R,5Z)-2-carboxy-4-methylthiazol-5(2H)-ylidene]ethyl phosphate is bound by residues glycine 175 and 195-196; that span reads IS.

Belongs to the thiamine-phosphate synthase family. Requires Mg(2+) as cofactor.

It catalyses the reaction 2-[(2R,5Z)-2-carboxy-4-methylthiazol-5(2H)-ylidene]ethyl phosphate + 4-amino-2-methyl-5-(diphosphooxymethyl)pyrimidine + 2 H(+) = thiamine phosphate + CO2 + diphosphate. The enzyme catalyses 2-(2-carboxy-4-methylthiazol-5-yl)ethyl phosphate + 4-amino-2-methyl-5-(diphosphooxymethyl)pyrimidine + 2 H(+) = thiamine phosphate + CO2 + diphosphate. The catalysed reaction is 4-methyl-5-(2-phosphooxyethyl)-thiazole + 4-amino-2-methyl-5-(diphosphooxymethyl)pyrimidine + H(+) = thiamine phosphate + diphosphate. It participates in cofactor biosynthesis; thiamine diphosphate biosynthesis; thiamine phosphate from 4-amino-2-methyl-5-diphosphomethylpyrimidine and 4-methyl-5-(2-phosphoethyl)-thiazole: step 1/1. Condenses 4-methyl-5-(beta-hydroxyethyl)thiazole monophosphate (THZ-P) and 2-methyl-4-amino-5-hydroxymethyl pyrimidine pyrophosphate (HMP-PP) to form thiamine monophosphate (TMP). This chain is Thiamine-phosphate synthase, found in Bacillus cereus (strain AH820).